The sequence spans 422 residues: Serine--tRNA ligase (422 aa).

231–233 contributes to the L-serine binding site; sequence TSE. ATP is bound at residue 262–264; that stretch reads RQE. Glu-285 lines the L-serine pocket. 349-352 lines the ATP pocket; the sequence is EISS. Residue Ser-384 coordinates L-serine.

Belongs to the class-II aminoacyl-tRNA synthetase family. Type-1 seryl-tRNA synthetase subfamily. As to quaternary structure, homodimer. The tRNA molecule binds across the dimer.

It is found in the cytoplasm. The catalysed reaction is tRNA(Ser) + L-serine + ATP = L-seryl-tRNA(Ser) + AMP + diphosphate + H(+). It carries out the reaction tRNA(Sec) + L-serine + ATP = L-seryl-tRNA(Sec) + AMP + diphosphate + H(+). It participates in aminoacyl-tRNA biosynthesis; selenocysteinyl-tRNA(Sec) biosynthesis; L-seryl-tRNA(Sec) from L-serine and tRNA(Sec): step 1/1. Its function is as follows. Catalyzes the attachment of serine to tRNA(Ser). Is also able to aminoacylate tRNA(Sec) with serine, to form the misacylated tRNA L-seryl-tRNA(Sec), which will be further converted into selenocysteinyl-tRNA(Sec). The polypeptide is Serine--tRNA ligase (Mycoplasma mycoides subsp. mycoides SC (strain CCUG 32753 / NCTC 10114 / PG1)).